The primary structure comprises 307 residues: 4-diphosphocytidyl-2-C-methyl-D-erythritol kinase (307 aa).

Residue Lys-9 is part of the active site. 94–104 contributes to the ATP binding site; the sequence is PIGAGLAGGSS. Asp-136 is an active-site residue.

It belongs to the GHMP kinase family. IspE subfamily.

It catalyses the reaction 4-CDP-2-C-methyl-D-erythritol + ATP = 4-CDP-2-C-methyl-D-erythritol 2-phosphate + ADP + H(+). The protein operates within isoprenoid biosynthesis; isopentenyl diphosphate biosynthesis via DXP pathway; isopentenyl diphosphate from 1-deoxy-D-xylulose 5-phosphate: step 3/6. In terms of biological role, catalyzes the phosphorylation of the position 2 hydroxy group of 4-diphosphocytidyl-2C-methyl-D-erythritol. This is 4-diphosphocytidyl-2-C-methyl-D-erythritol kinase from Synechococcus sp. (strain CC9902).